The chain runs to 528 residues: Propionate catabolism operon regulatory protein (528 aa).

The 244-residue stretch at 218-461 folds into the Sigma-54 factor interaction domain; it reads MLGQSPQMEQ…RNMMERLALF (244 aa). An ATP-binding site is contributed by 318-327; the sequence is AHGGTLFLDE. The segment at residues 508–527 is a DNA-binding region (H-T-H motif); sequence KTAAANYLGISRTTFWRRLK.

Its function is as follows. Involved in the transcriptional regulation of the propionate catabolism operon. This is Propionate catabolism operon regulatory protein (prpR) from Escherichia coli (strain K12).